A 275-amino-acid polypeptide reads, in one-letter code: Large ribosomal subunit protein uL2c (275 aa).

The segment at 225 to 249 (PVDHPHGGGEGRAPIGRKKPTTPWG) is disordered.

It belongs to the universal ribosomal protein uL2 family. As to quaternary structure, part of the 50S ribosomal subunit.

Its subcellular location is the plastid. This is Large ribosomal subunit protein uL2c (rpl2) from Cuscuta reflexa (Southern Asian dodder).